Reading from the N-terminus, the 92-residue chain is uncharacterized protein (92 aa).

A compositionally biased stretch (basic and acidic residues) spans 1 to 10 (MGLLKKKDST). A disordered region spans residues 1-21 (MGLLKKKDSTSARSSTSPCAD). Residues 16 to 66 (TSPCADLRNAYHNCFNKWYSEKFVKGQWDKEECVAEWKKYRDCLSENLDGK) form the CHCH domain. Short sequence motifs (cx9C motif) lie at residues 19–29 (CADLRNAYHNC) and 48–58 (CVAEWKKYRDC). 2 disulfides stabilise this stretch: Cys-19–Cys-58 and Cys-29–Cys-48.

This sequence belongs to the TRIAP1/MDM35 family.

This is an uncharacterized protein from Arabidopsis thaliana (Mouse-ear cress).